Here is a 495-residue protein sequence, read N- to C-terminus: Cytochrome P450 monooxygenase 88 (495 aa).

A helical membrane pass occupies residues 2 to 22; the sequence is FLQIVTSVLATGLLYALISVL. Residues asparagine 25 and asparagine 198 are each glycosylated (N-linked (GlcNAc...) asparagine). Cysteine 428 contacts heme.

The protein belongs to the cytochrome P450 family. Heme serves as cofactor.

Its subcellular location is the membrane. It participates in secondary metabolite biosynthesis. Cytochrome P450 monooxygenase that is able to use 4-ethoxybenzoic acid as a substrate for oxidation. The polypeptide is Cytochrome P450 monooxygenase 88 (Postia placenta (strain ATCC 44394 / Madison 698-R) (Brown rot fungus)).